The primary structure comprises 431 residues: Nuclear receptor subfamily 1 group I member 2 (431 aa).

Positions 35 to 104 form a DNA-binding region, nuclear receptor; the sequence is LQICRVCGDK…RLRKCLESGM (70 aa). NR C4-type zinc fingers lie at residues 38–58 and 74–99; these read CRVC…CEGC and CPFR…LRKC. The short motif at 63–89 is the Bipartite nuclear localization signal element; the sequence is RRAMKRNVRLRCPFRKGTCEITRKTRR. The interval 105-142 is hinge; sequence KKEMIMSDAAVEQRRALIKRKKREKIEAPPPGGQGLTE. Positions 143–430 constitute an NR LBD domain; sequence EQQALIQELM…LMQELFSSTD (288 aa). Residues serine 244 and 282–285 contribute to the hyperforin site; that span reads ILRF.

This sequence belongs to the nuclear hormone receptor family. NR1 subfamily. Heterodimer with RXRA. Interacts with NCOA1. Interacts (via domain NR LBD) with CRY1 and CRY2 in a ligand-dependent manner.

It is found in the nucleus. In terms of biological role, nuclear receptor that binds and is activated by a variety of endogenous and xenobiotic compounds. Transcription factor that activates the transcription of multiple genes involved in the metabolism and secretion of potentially harmful xenobiotics, endogenous compounds and drugs. Response to specific ligands is species-specific, due to differences in the ligand-binding domain. Binds to a response element in the promoters of the CYP3A4 and ABCB1/MDR1 genes. Activated by naturally occurring steroids such as pregnenolone and progesterone, the cholesterol metabolite 5-beta-cholestane-3-alpha,7-alpha,12-alpha-triol, synthetic glucocorticoids and antiglucocorticoids and 16-alpha-carbonitrile (PCN). This Mus musculus (Mouse) protein is Nuclear receptor subfamily 1 group I member 2 (Nr1i2).